A 726-amino-acid polypeptide reads, in one-letter code: F-box protein COS111 (726 aa).

Positions 143–194 (FADINCLPEEIICRIIANLNDADSQRNCLLVSQEWSECAKRIIYKDVKFTST) constitute an F-box domain. Residues 276 to 295 (RSRTRRSSDASSMNSSVFSH) are disordered. Residues 284 to 295 (DASSMNSSVFSH) show a composition bias toward low complexity.

Functionally, F-box protein probably involved in ubiquitin conjugation pathway. The chain is F-box protein COS111 (COS111) from Kluyveromyces lactis (strain ATCC 8585 / CBS 2359 / DSM 70799 / NBRC 1267 / NRRL Y-1140 / WM37) (Yeast).